Consider the following 288-residue polypeptide: 18S rRNA aminocarboxypropyltransferase (288 aa).

Residues Ser43, Val91, Leu114, and Trp129 each contribute to the S-adenosyl-L-methionine site. The segment covering 209 to 221 (IWSAGNLNHKPTL) has biased composition (polar residues). Positions 209–267 (IWSAGNLNHKPTLNTSSTHSNSEESRSPLHEPSEASLAHDEHSIPTDDNEETLTNLQAN) are disordered. Residues 229–253 (NSEESRSPLHEPSEASLAHDEHSIP) are compositionally biased toward basic and acidic residues.

The protein belongs to the TDD superfamily. TSR3 family.

Its subcellular location is the cytoplasm. It localises to the nucleus. The enzyme catalyses an N(1)-methylpseudouridine in rRNA + S-adenosyl-L-methionine = N(1)-methyl-N(3)-[(3S)-3-amino-3-carboxypropyl]pseudouridine in rRNA + S-methyl-5'-thioadenosine + H(+). It carries out the reaction N(1)-methylpseudouridine(1191) in yeast 18S rRNA + S-adenosyl-L-methionine = N(1)-methyl-N(3)-[(3S)-3-amino-3-carboxypropyl]pseudouridine(1191) in yeast 18S rRNA + S-methyl-5'-thioadenosine + H(+). Functionally, aminocarboxypropyltransferase that catalyzes the aminocarboxypropyl transfer on pseudouridine at position 1191 (Psi1191) in 18S rRNA. It constitutes the last step in biosynthesis of the hypermodified N1-methyl-N3-(3-amino-3-carboxypropyl) pseudouridine (m1acp3-Psi) conserved in eukaryotic 18S rRNA. Required for processing 35S pre-rRNA at site D. The sequence is that of 18S rRNA aminocarboxypropyltransferase from Schizosaccharomyces pombe (strain 972 / ATCC 24843) (Fission yeast).